The primary structure comprises 500 residues: UPF0371 protein SZO_06760 (500 aa).

This sequence belongs to the UPF0371 family.

The protein is UPF0371 protein SZO_06760 of Streptococcus equi subsp. zooepidemicus (strain H70).